The following is a 493-amino-acid chain: Probable fatty acyl-CoA reductase 4 (493 aa).

This sequence belongs to the fatty acyl-CoA reductase family. As to expression, expressed in the endodermal cell layer surrounding the central vasculature in roots. Expressed in the hilum region of seeds. Expressed in stamen filaments and receptacle of siliques.

It catalyses the reaction a long-chain fatty acyl-CoA + 2 NADPH + 2 H(+) = a long-chain primary fatty alcohol + 2 NADP(+) + CoA. Its function is as follows. Catalyzes the reduction of fatty acyl-CoA to fatty alcohols. Catalyzes specifically the formation of C18:0 and C20:0 fatty alcohols. Provides the fatty alcohols required for synthesis of suberin in roots, seed coat and wound-induced leaf tissue. Provides the fatty alcohols required for synthesis of alkyl hydroxycinnamates in root waxes. The protein is Probable fatty acyl-CoA reductase 4 of Arabidopsis thaliana (Mouse-ear cress).